A 103-amino-acid chain; its full sequence is Large ribosomal subunit protein eL42 (103 aa).

The disordered stretch occupies residues 37-56 (GKRRYDRKQSGFGGQTKPVF).

Belongs to the eukaryotic ribosomal protein eL42 family.

This is Large ribosomal subunit protein eL42 (rpl36a) from Dictyostelium discoideum (Social amoeba).